Reading from the N-terminus, the 500-residue chain is L-arabinose isomerase (500 aa).

Positions 306, 333, 350, and 450 each coordinate Mn(2+).

This sequence belongs to the arabinose isomerase family. Homohexamer. It depends on Mn(2+) as a cofactor.

It catalyses the reaction beta-L-arabinopyranose = L-ribulose. It functions in the pathway carbohydrate degradation; L-arabinose degradation via L-ribulose; D-xylulose 5-phosphate from L-arabinose (bacterial route): step 1/3. Catalyzes the conversion of L-arabinose to L-ribulose. This Yersinia pestis bv. Antiqua (strain Nepal516) protein is L-arabinose isomerase.